The chain runs to 173 residues: Photosystem I assembly protein Ycf3 (173 aa).

TPR repeat units lie at residues 35-68 (AFVYYRDGMSAQAEGEYAEALEYYEEALTLEEDT), 72-105 (GYILYNMGLIYASNGDHNKALELYHQAIELNPRL), and 120-153 (GEKEKEAGDNEAGEALFDQAADYWIRAIRMAPNN).

The protein belongs to the Ycf3 family.

Its subcellular location is the cellular thylakoid membrane. Functionally, essential for the assembly of the photosystem I (PSI) complex. May act as a chaperone-like factor to guide the assembly of the PSI subunits. This is Photosystem I assembly protein Ycf3 from Nostoc punctiforme (strain ATCC 29133 / PCC 73102).